The primary structure comprises 314 residues: Leucine-rich repeat-containing protein 52 (314 aa).

The N-terminal stretch at 1 to 23 (MSLASGPSSKLLLFSLGMGLVSG) is a signal peptide. One can recognise an LRRNT domain in the interval 24–53 (SKCPNKCVCQDQEVACIDLHLTEYPADIPL). At 24 to 244 (SKCPNKCVCQ…MCITHLDQQD (221 aa)) the chain is on the extracellular side. 2 disulfides stabilise this stretch: Cys-26/Cys-32 and Cys-30/Cys-39. 5 LRR repeats span residues 54 to 73 (NTRR…ALQL), 78 to 99 (DLVY…TFIG), 102 to 123 (RLIY…SFSV), 126 to 148 (NLVR…VFAN), and 151 to 172 (SLRY…GFHH). N-linked (GlcNAc...) asparagine glycosylation is found at Asn-112, Asn-131, and Asn-148. The region spanning 184-238 (NPWICNCSFLDFTIHLLVSHMDHPDAQNATCTEPAELKGWPITKVGNPLQYMCIT) is the LRRCT domain. 2 cysteine pairs are disulfide-bonded: Cys-188–Cys-214 and Cys-190–Cys-236. N-linked (GlcNAc...) asparagine glycans are attached at residues Asn-189 and Asn-211. The helical transmembrane segment at 245–265 (YIFLLLIGFCIFAAGTVAAWL) threads the bilayer. Residues 266 to 314 (TGVCAVLYQNALRTSSGDDTEDETGSRFANQIFRSNTHLGPIRRFPELI) lie on the Cytoplasmic side of the membrane.

In terms of assembly, interacts with KCNMA1. Interacts with KCNU1; this interaction may be required for LRRC52 stability and changes the channel gating properties. In terms of processing, N-glycosylated. In terms of tissue distribution, testis-specific (at protein level). At the mRNA level, also detected in kidney, ventricle, spinal cord and skeletal muscle, although at lower levels compared to testis. Expression in testis at the protein level requires the presence of KCNU1.

The protein resides in the cell membrane. Functionally, auxiliary protein of the large-conductance, voltage and calcium-activated potassium channel (BK alpha). Modulates gating properties by producing a marked shift in the BK channel's voltage dependence of activation in the hyperpolarizing direction, and in the absence of calcium. KCNU1 channel auxiliary protein. Modulates KCNU1 gating properties, shifting KCNU1 gating to more negative potentials at a given pH. The chain is Leucine-rich repeat-containing protein 52 (Lrrc52) from Mus musculus (Mouse).